Reading from the N-terminus, the 418-residue chain is 3-isopropylmalate dehydratase large subunit (418 aa).

Residues cysteine 299, cysteine 359, and cysteine 362 each coordinate [4Fe-4S] cluster.

It belongs to the aconitase/IPM isomerase family. LeuC type 2 subfamily. As to quaternary structure, heterodimer of LeuC and LeuD. Requires [4Fe-4S] cluster as cofactor.

The catalysed reaction is (2R,3S)-3-isopropylmalate = (2S)-2-isopropylmalate. The protein operates within amino-acid biosynthesis; L-leucine biosynthesis; L-leucine from 3-methyl-2-oxobutanoate: step 2/4. Catalyzes the isomerization between 2-isopropylmalate and 3-isopropylmalate, via the formation of 2-isopropylmaleate. This is 3-isopropylmalate dehydratase large subunit from Oleidesulfovibrio alaskensis (strain ATCC BAA-1058 / DSM 17464 / G20) (Desulfovibrio alaskensis).